We begin with the raw amino-acid sequence, 1271 residues long: MGTKWTEEQELAINTRKCNLLVAAAAGSGKTAVLVERIIKMITEGENPVDIDKLLVVTFTNAAASEMRERIGDAISKALEKDPSSEALQRQLALLNRASITTMHSFCLEVIKNNFHLIDLDPGFRIGDQTECELIKQDILADLFEDMYAKDDECFKDLVEAYGGSKSDDNLNSIILKFYNFIMSGPWPETWLKDKVEEFNINSIEELEGKKWIEVLKESIILDLNNAYSMLTQARDIAEMGGGLEPYLVNIYPEIIQVEELRIALSEGIVKFYNKLMGASFGRLKSVRKASVDDERALEKAKSLRDESKKIIENLRDNVFETSLEEAVLGMKKMYPLMKCLSGLVIEFSNRYRDKKREKDILDFNDLEHLCLEILIDKDEEGNIKPSQVALEFKDKFEEVLVDEYQDSNTIQETIVGMVSRRDVENPNVFMVGDVKQSIYKFRQANPELFLEKYINYREFEDSNRKIMLYKNFRSREEIINGVNYIFKTLMSNTVGELEYDEKEALNLGASYGELNEENVEKEYIDEIENLKVAGDIELNILNKAGNKEYRDDDELGEEEEDLDSIQLEARIIGKKIKELMNPEDGSHYMVFDKDLGKYRRIKYKDIVILLRATKNWAETFVDELGTYGIPVYADTGTGYFQTIEIRTILALLHIIDNPMQDIYILSALRSPIFSFTSEEFADLRLLNKDKYFFEIIKEVVDGIYDESISKELKGKCKYFLDYLNKWREKAAYMPIDEFIWFLYSDTSYYGYVGTMPNGVQRQANLRILFQRAKQYESTSFKGLFNFINFINKLKKSSGDMGSAKILGENENVVRIMSIHKSKGLEFPVVILGGTGKQFNKMDLREDILLHETLGIGTNCIDVKKRIKYDTLQKHAIKKKCELEVLSEEMRILYVAFTRAKEKLIITGAVSDLEKSCENWCKASASSGDNRINPGNVLKGKSYLDWICMALTKHKDGDAIRNIGNGDITLNLDDKSNWSFKSWDRSELLETNNNKKEKNNIDIFESNNWIESKKDIKEVIEIRDRLGFKYKYIESCNTPSNISVTELKRAHQEEEFMQESYNIIDNESNEENKKEKIKRKPRFMEERQEEFSAAKKGTITHFVMQHIDLDKVTYIDEIREEVLKMVKKELLTEEEGKVVNVFKIQKFFKSDLGQRMLNSYKSGKKVYRELPFITEIPSSIIEKNLDPKIYGEEKVRLQGIIDAFFEEEDGYVLLDYKTDYVKEGEEEDFINKYKIQINLYKDTLNKILGEEVKEAYLYSFYLEKELKISKE.

One can recognise a UvrD-like helicase ATP-binding domain in the interval 3–476; the sequence is TKWTEEQELA…IMLYKNFRSR (474 aa). An ATP-binding site is contributed by 24 to 31; the sequence is AAAGSGKT. Residues 528–824 form the UvrD-like helicase C-terminal domain; sequence IENLKVAGDI…RIMSIHKSKG (297 aa).

Belongs to the helicase family. AddA subfamily. As to quaternary structure, heterodimer of AddA and AddB/RexB. Mg(2+) is required as a cofactor.

The enzyme catalyses Couples ATP hydrolysis with the unwinding of duplex DNA by translocating in the 3'-5' direction.. It carries out the reaction ATP + H2O = ADP + phosphate + H(+). The heterodimer acts as both an ATP-dependent DNA helicase and an ATP-dependent, dual-direction single-stranded exonuclease. Recognizes the chi site generating a DNA molecule suitable for the initiation of homologous recombination. The AddA nuclease domain is required for chi fragment generation; this subunit has the helicase and 3' -&gt; 5' nuclease activities. The protein is ATP-dependent helicase/nuclease subunit A of Clostridium perfringens (strain ATCC 13124 / DSM 756 / JCM 1290 / NCIMB 6125 / NCTC 8237 / Type A).